The following is a 93-amino-acid chain: Small ribosomal subunit protein uS19 (93 aa).

The protein belongs to the universal ribosomal protein uS19 family.

Functionally, protein S19 forms a complex with S13 that binds strongly to the 16S ribosomal RNA. The chain is Small ribosomal subunit protein uS19 from Nocardia farcinica (strain IFM 10152).